The chain runs to 139 residues: Ribulose bisphosphate carboxylase small subunit (139 aa).

Belongs to the RuBisCO small chain family. Heterohexadecamer of 8 large and 8 small subunits.

The protein resides in the plastid. Its subcellular location is the chloroplast. Functionally, ruBisCO catalyzes two reactions: the carboxylation of D-ribulose 1,5-bisphosphate, the primary event in carbon dioxide fixation, as well as the oxidative fragmentation of the pentose substrate in the photorespiration process. Both reactions occur simultaneously and in competition at the same active site. Although the small subunit is not catalytic it is essential for maximal activity. The chain is Ribulose bisphosphate carboxylase small subunit from Thalassiosira nordenskioeldii (Marine diatom).